The following is a 222-amino-acid chain: Putative O-methyltransferase MAV_1364 (222 aa).

Residues V49, E71, G73–T74, S79, D97, and I98 each bind S-adenosyl-L-methionine. D145 serves as a coordination point for substrate. D147 provides a ligand contact to S-adenosyl-L-methionine.

Belongs to the class I-like SAM-binding methyltransferase superfamily. Cation-dependent O-methyltransferase family.

This is Putative O-methyltransferase MAV_1364 from Mycobacterium avium (strain 104).